The primary structure comprises 614 residues: Zinc metalloproteinase-disintegrin-like BmMP (614 aa).

The first 20 residues, 1–20, serve as a signal peptide directing secretion; it reads MIQALLVTICLAVFPYQGSS. Positions 21–188 are excised as a propeptide; it reads IILESGNVND…WESDEPIRNA (168 aa). N-linked (GlcNAc...) asparagine glycosylation occurs at Asn-187. The region spanning 205–401 is the Peptidase M12B domain; sequence KYIEFYVAVD…DRPQCILNKP (197 aa). 17 cysteine pairs are disulfide-bonded: Cys-316-Cys-396, Cys-356-Cys-380, Cys-359-Cys-364, Cys-412-Cys-441, Cys-423-Cys-436, Cys-425-Cys-431, Cys-435-Cys-458, Cys-449-Cys-455, Cys-454-Cys-480, Cys-467-Cys-487, Cys-474-Cys-506, Cys-499-Cys-511, Cys-518-Cys-568, Cys-533-Cys-576, Cys-546-Cys-556, Cys-563-Cys-602, and Cys-596-Cys-607. His-341 contributes to the Zn(2+) binding site. Glu-342 is a catalytic residue. Zn(2+) contacts are provided by His-345 and His-351. The 87-residue stretch at 409–495 folds into the Disintegrin domain; sequence PAICGNYFVE…ECPTDIFRRN (87 aa). Residues 473–475 carry the D/ECD-tripeptide motif; sequence DCD.

It belongs to the venom metalloproteinase (M12B) family. P-III subfamily. P-IIIa sub-subfamily. As to quaternary structure, monomer. Requires Zn(2+) as cofactor. As to expression, expressed by the venom gland.

Its subcellular location is the secreted. Its function is as follows. Snake venom zinc metalloproteinase that inhibits platelet aggregation and degrades fibrinogen. This is Zinc metalloproteinase-disintegrin-like BmMP from Bungarus multicinctus (Many-banded krait).